Reading from the N-terminus, the 455-residue chain is ATP-dependent protease ATPase subunit HslU (455 aa).

ATP-binding positions include isoleucine 19 and 61–66 (GVGKTE). The disordered stretch occupies residues 144-163 (ESKVGFANEPAEDAASKKEK). ATP contacts are provided by aspartate 268, glutamate 333, and arginine 405.

Belongs to the ClpX chaperone family. HslU subfamily. In terms of assembly, a double ring-shaped homohexamer of HslV is capped on each side by a ring-shaped HslU homohexamer. The assembly of the HslU/HslV complex is dependent on binding of ATP.

Its subcellular location is the cytoplasm. In terms of biological role, ATPase subunit of a proteasome-like degradation complex; this subunit has chaperone activity. The binding of ATP and its subsequent hydrolysis by HslU are essential for unfolding of protein substrates subsequently hydrolyzed by HslV. HslU recognizes the N-terminal part of its protein substrates and unfolds these before they are guided to HslV for hydrolysis. In Francisella tularensis subsp. holarctica (strain FTNF002-00 / FTA), this protein is ATP-dependent protease ATPase subunit HslU.